Consider the following 860-residue polypeptide: DNA mismatch repair protein MutS (860 aa).

ATP is bound at residue 607-614; it reads GPNMSGKS.

It belongs to the DNA mismatch repair MutS family.

Functionally, this protein is involved in the repair of mismatches in DNA. It is possible that it carries out the mismatch recognition step. This protein has a weak ATPase activity. The protein is DNA mismatch repair protein MutS of Listeria monocytogenes serotype 4a (strain HCC23).